The primary structure comprises 98 residues: MLEQQPTQNPLTVSMLNAQAQQVDRPLRENVKQAVRNYLRNLDGQDPTELYELVLSEIEHPMLDMVMQHTRGNQTRAATMLGINRGTLRKKLKKYGMG.

The H-T-H motif DNA-binding region spans 74-93; it reads QTRAATMLGINRGTLRKKLK.

The protein belongs to the transcriptional regulatory Fis family. In terms of assembly, homodimer.

In terms of biological role, activates ribosomal RNA transcription. Plays a direct role in upstream activation of rRNA promoters. The protein is DNA-binding protein Fis of Glaesserella parasuis serovar 5 (strain SH0165) (Haemophilus parasuis).